Reading from the N-terminus, the 255-residue chain is Acetylglutamate kinase (255 aa).

Substrate-binding positions include 40–41 (GG), arginine 62, and asparagine 153.

It belongs to the acetylglutamate kinase family. ArgB subfamily.

It localises to the cytoplasm. The enzyme catalyses N-acetyl-L-glutamate + ATP = N-acetyl-L-glutamyl 5-phosphate + ADP. The protein operates within amino-acid biosynthesis; L-arginine biosynthesis; N(2)-acetyl-L-ornithine from L-glutamate: step 2/4. Catalyzes the ATP-dependent phosphorylation of N-acetyl-L-glutamate. The polypeptide is Acetylglutamate kinase (Bacillus cereus (strain ATCC 10987 / NRS 248)).